The chain runs to 216 residues: UPF0711 protein C18orf21 homolog (216 aa).

Disordered regions lie at residues 118–185 (RSFL…ASKT) and 197–216 (SQSE…LSSL). Residues 124–136 (LKSNPTTPTSKLS) are compositionally biased toward polar residues. Ser-126 is modified (phosphoserine). A phosphothreonine mark is found at Thr-130 and Thr-139. 2 stretches are compositionally biased toward polar residues: residues 145-157 (PSSA…SGSK) and 167-182 (TPTS…SKNA). Residues 200–209 (ESKKNPKMDF) are compositionally biased toward basic and acidic residues.

The protein belongs to the UPF0711 family.

In Bos taurus (Bovine), this protein is UPF0711 protein C18orf21 homolog.